A 273-amino-acid polypeptide reads, in one-letter code: Glutamate racemase (273 aa).

Substrate is bound by residues 7 to 8 and 39 to 40; these read DS and YG. Cys70 serves as the catalytic Proton donor/acceptor. 71-72 contributes to the substrate binding site; the sequence is NT. Cys194 functions as the Proton donor/acceptor in the catalytic mechanism. Residue 195–196 participates in substrate binding; the sequence is TH.

It belongs to the aspartate/glutamate racemases family.

The enzyme catalyses L-glutamate = D-glutamate. The protein operates within cell wall biogenesis; peptidoglycan biosynthesis. Functionally, provides the (R)-glutamate required for cell wall biosynthesis. The chain is Glutamate racemase from Dinoroseobacter shibae (strain DSM 16493 / NCIMB 14021 / DFL 12).